We begin with the raw amino-acid sequence, 569 residues long: Potassium-transporting ATPase potassium-binding subunit (569 aa).

A run of 10 helical transmembrane segments spans residues 3–23, 68–88, 136–156, 179–199, 259–279, 284–304, 384–404, 422–442, 490–510, and 534–554; these read LMEY…SPVL, AASL…VLML, VGLA…AVAV, VLYV…GQGV, LQML…GEAV, HAWT…LSLY, GLYG…LMVG, AMLA…VAAV, LALA…GVAG, and LLLT…ALAL.

Belongs to the KdpA family. The system is composed of three essential subunits: KdpA, KdpB and KdpC.

It is found in the cell inner membrane. Part of the high-affinity ATP-driven potassium transport (or Kdp) system, which catalyzes the hydrolysis of ATP coupled with the electrogenic transport of potassium into the cytoplasm. This subunit binds the periplasmic potassium ions and delivers the ions to the membrane domain of KdpB through an intramembrane tunnel. This is Potassium-transporting ATPase potassium-binding subunit from Nitratidesulfovibrio vulgaris (strain DP4) (Desulfovibrio vulgaris).